The primary structure comprises 434 residues: Glutamine synthetase leaf isozyme, chloroplastic (434 aa).

Disordered regions lie at residues methionine 1–proline 33 and threonine 101–proline 126. The transit peptide at methionine 1–alanine 54 directs the protein to the chloroplast. The segment covering alanine 10 to glutamine 25 has biased composition (gly residues). The 81-residue stretch at isoleucine 81–glycine 161 folds into the GS beta-grasp domain. Residues lysine 168–valine 434 enclose the GS catalytic domain.

Belongs to the glutamine synthetase family. Homooctamer.

Its subcellular location is the plastid. It localises to the chloroplast. The enzyme catalyses L-glutamate + NH4(+) + ATP = L-glutamine + ADP + phosphate + H(+). Functionally, the light-modulated chloroplast enzyme, encoded by a nuclear gene and expressed primarily in leaves, is responsible for the reassimilation of the ammonia generated by photorespiration. This chain is Glutamine synthetase leaf isozyme, chloroplastic, found in Hordeum vulgare (Barley).